Consider the following 399-residue polypeptide: Ribonucleoside-diphosphate reductase small chain 1 (399 aa).

Phosphoserine is present on residues Ser15, Ser24, and Ser41. Fe cation contacts are provided by Asp145, Glu176, and His179. Tyr183 is a catalytic residue. Glu239, Glu273, and His276 together coordinate Fe cation.

This sequence belongs to the ribonucleoside diphosphate reductase small chain family. As to quaternary structure, heterotetramer of two large (R1) and two small (R2) subunits. S.cerevisiae has two different R1 subunits (RNR1 and RNR3) and two different R2 subunits (RNR2 and RNR4). The functional form of the small subunits is a RNR2-RNR4 heterodimer, where RNR2 provides the iron-radical center and RNR4 is required for proper folding of RNR2 and assembly with the large subunits. Under normal growth conditions, the active form of the large subunits is a homodimer of the constitutively expressed RNR1. In damaged cells or cells arrested for DNA synthesis, the reductase consists of multiple species because of the association of the small subunits (RNR2-RNR4) with either the RNR1 homodimer or a heterodimer of RNR1 and the damage-inducible RNR3. Interacts with DIF1. Fe cation serves as cofactor.

It is found in the nucleus. It carries out the reaction a 2'-deoxyribonucleoside 5'-diphosphate + [thioredoxin]-disulfide + H2O = a ribonucleoside 5'-diphosphate + [thioredoxin]-dithiol. Provides the precursors necessary for DNA synthesis. Catalyzes the biosynthesis of deoxyribonucleotides from the corresponding ribonucleotides. RNR2 provides the diiron-tyrosyl radical center. The sequence is that of Ribonucleoside-diphosphate reductase small chain 1 (RNR2) from Saccharomyces cerevisiae (strain ATCC 204508 / S288c) (Baker's yeast).